Here is a 294-residue protein sequence, read N- to C-terminus: Phosphoribosylaminoimidazole-succinocarboxamide synthase (294 aa).

It belongs to the SAICAR synthetase family.

It carries out the reaction 5-amino-1-(5-phospho-D-ribosyl)imidazole-4-carboxylate + L-aspartate + ATP = (2S)-2-[5-amino-1-(5-phospho-beta-D-ribosyl)imidazole-4-carboxamido]succinate + ADP + phosphate + 2 H(+). The protein operates within purine metabolism; IMP biosynthesis via de novo pathway; 5-amino-1-(5-phospho-D-ribosyl)imidazole-4-carboxamide from 5-amino-1-(5-phospho-D-ribosyl)imidazole-4-carboxylate: step 1/2. The polypeptide is Phosphoribosylaminoimidazole-succinocarboxamide synthase (Thermoplasma volcanium (strain ATCC 51530 / DSM 4299 / JCM 9571 / NBRC 15438 / GSS1)).